A 321-amino-acid chain; its full sequence is 37 kDa cell surface protein (321 aa).

The protein resides in the secreted. Its subcellular location is the cell wall. This Candida albicans (Yeast) protein is 37 kDa cell surface protein (CSP37).